A 482-amino-acid chain; its full sequence is Catalase (482 aa).

Polar residues predominate over residues 1 to 23 (MSQNKTLTTASGPPVADNQNSRS). Residues 1–28 (MSQNKTLTTASGPPVADNQNSRSAGPRG) form a disordered region. Active-site residues include His55 and Asn128. Position 338 (Tyr338) interacts with heme. Positions 370–395 (SMAFGSNGGAAPNYEPNSYADAPKQA) are disordered.

It belongs to the catalase family. It depends on heme as a cofactor.

It carries out the reaction 2 H2O2 = O2 + 2 H2O. Functionally, decomposes hydrogen peroxide into water and oxygen; serves to protect cells from the toxic effects of hydrogen peroxide. This Onchocerca volvulus endobacterium protein is Catalase (cat).